Reading from the N-terminus, the 251-residue chain is Pantothenate synthetase (251 aa).

28 to 35 (MGALHTGH) is an ATP binding site. The active-site Proton donor is the His-35. Gln-59 provides a ligand contact to (R)-pantoate. Gln-59 lines the beta-alanine pocket. Residue 145-148 (GEKD) coordinates ATP. Gln-151 contacts (R)-pantoate. ATP-binding positions include Val-174 and 182–185 (KSSR).

It belongs to the pantothenate synthetase family. As to quaternary structure, homodimer.

The protein resides in the cytoplasm. The enzyme catalyses (R)-pantoate + beta-alanine + ATP = (R)-pantothenate + AMP + diphosphate + H(+). It functions in the pathway cofactor biosynthesis; (R)-pantothenate biosynthesis; (R)-pantothenate from (R)-pantoate and beta-alanine: step 1/1. In terms of biological role, catalyzes the condensation of pantoate with beta-alanine in an ATP-dependent reaction via a pantoyl-adenylate intermediate. This Bdellovibrio bacteriovorus (strain ATCC 15356 / DSM 50701 / NCIMB 9529 / HD100) protein is Pantothenate synthetase.